The following is a 74-amino-acid chain: Omega-conotoxin-like protein 1 (74 aa).

The first 20 residues, 1-20 (MSKFILLVCILLLTTNIVSA), serve as a signal peptide directing secretion. Cystine bridges form between Cys24–Cys38, Cys31–Cys43, and Cys37–Cys50.

Highly expressed in brain. Is also found in hemolymph.

In terms of biological role, the impact of this protein on the neuronal activity of the honeybee brain is not known. It does not affect apparent movement or hatching of blowfly larvae. However, when injected into fish, it induces a strong reversible paralytic effect. In addition, the presence of this small peptide in the hemolymph of adult drones together with its induction after bacterial infection suggests that this peptide exhibits antibacterial activity. This peptide may act by inhibiting ion channels. This chain is Omega-conotoxin-like protein 1, found in Apis mellifera (Honeybee).